Consider the following 240-residue polypeptide: Small ribosomal subunit protein uS2 (240 aa).

The protein belongs to the universal ribosomal protein uS2 family.

This chain is Small ribosomal subunit protein uS2 (rpsB), found in Pasteurella multocida (strain Pm70).